Here is a 557-residue protein sequence, read N- to C-terminus: Carotenoid-cleaving dioxygenase, mitochondrial (557 aa).

Positions 203, 263, 334, and 551 each coordinate Fe cation.

The protein belongs to the carotenoid oxygenase family. Fe(2+) serves as cofactor.

The protein resides in the mitochondrion. It catalyses the reaction all-trans-beta-carotene + O2 = beta-ionone + all-trans-10'-apo-beta-carotenal. The enzyme catalyses 5-cis-lycopene + O2 = 5-cis-10'-apo-lycopenal + (3E,5E)-6,10-dimethylundeca-3,5,9-trien-2-one. The catalysed reaction is 13-cis-lycopene + O2 = 13-cis-10'-apo-lycopenal + (3E,5E)-6,10-dimethylundeca-3,5,9-trien-2-one. It carries out the reaction lutein + O2 = (3R,6R)-hydroxy-alpha-ionone + (3R)-3-hydroxy-10'-apo-beta-carotenal. It catalyses the reaction lutein + O2 = (3R,6R)-3-hydroxy-10'-apo-alpha-carotenal + (3R)-hydroxy-beta-ionone. The enzyme catalyses all-trans-zeaxanthin + 2 O2 = 4,9-dimethyldodeca-2,4,6,8,10-pentaenedial + 2 (3R)-hydroxy-beta-ionone. The catalysed reaction is all-trans-zeaxanthin + O2 = (3R)-3-hydroxy-10'-apo-beta-carotenal + (3R)-hydroxy-beta-ionone. It carries out the reaction beta-cryptoxanthin + O2 = all-trans-10'-apo-beta-carotenal + (3R)-hydroxy-beta-ionone. It catalyses the reaction all-trans-10'-apo-beta-carotenal + O2 = beta-ionone + 4,9-dimethyldodeca-2,4,6,8,10-pentaenedial. The enzyme catalyses (3R)-3-hydroxy-10'-apo-beta-carotenal + O2 = 4,9-dimethyldodeca-2,4,6,8,10-pentaenedial + (3R)-hydroxy-beta-ionone. The catalysed reaction is (3R,6R)-3-hydroxy-10'-apo-alpha-carotenal + O2 = (3R,6R)-hydroxy-alpha-ionone + 4,9-dimethyldodeca-2,4,6,8,10-pentaenedial. Its function is as follows. Broad specificity mitochondrial dioxygenase that mediates the asymmetric oxidative cleavage of carotenoids. Cleaves carotenes (pure hydrocarbon carotenoids) such as all-trans-beta-carotene and lycopene as well as xanthophylls (oxygenated carotenoids) such as zeaxanthin, lutein and beta-cryptoxanthin at both the 9,10 and the 9',10' carbon-carbon double bond. Through its function in carotenoids metabolism regulates oxidative stress and the production of important signaling molecules. The chain is Carotenoid-cleaving dioxygenase, mitochondrial from Pongo abelii (Sumatran orangutan).